We begin with the raw amino-acid sequence, 240 residues long: Ribonuclease PH (240 aa).

Phosphate-binding positions include arginine 86 and 124 to 126 (GTR).

Belongs to the RNase PH family. Homohexameric ring arranged as a trimer of dimers.

It catalyses the reaction tRNA(n+1) + phosphate = tRNA(n) + a ribonucleoside 5'-diphosphate. Its function is as follows. Phosphorolytic 3'-5' exoribonuclease that plays an important role in tRNA 3'-end maturation. Removes nucleotide residues following the 3'-CCA terminus of tRNAs; can also add nucleotides to the ends of RNA molecules by using nucleoside diphosphates as substrates, but this may not be physiologically important. Probably plays a role in initiation of 16S rRNA degradation (leading to ribosome degradation) during starvation. The polypeptide is Ribonuclease PH (Rhodospirillum rubrum (strain ATCC 11170 / ATH 1.1.1 / DSM 467 / LMG 4362 / NCIMB 8255 / S1)).